Consider the following 231-residue polypeptide: S-norcoclaurine synthase 1 (231 aa).

Residue Tyr-107 to Glu-109 coordinates dopamine. The Proton donor role is filled by Lys-121. Asp-140 serves as a coordination point for (4-hydroxyphenyl)acetaldehyde. A helical transmembrane segment spans residues Leu-210–Pro-230.

It belongs to the BetVI family. Detected in roots, stems, leaves, flower buds and germinating seeds.

It localises to the membrane. It carries out the reaction (4-hydroxyphenyl)acetaldehyde + dopamine = (S)-norcoclaurine + H2O. The protein operates within alkaloid biosynthesis; (S)-reticuline biosynthesis. Activity doubles within 5 hours of elicitor treatment and continues to increase for at least 80 hours. Functionally, involved in the biosynthesis of (S)-coclaurine, the common precursor of all benzylisoquinoline alkaloids such as morphine, sanguinarine, codeine or papaverine. Condenses dopamine and 4-hydroxyphenylacetaldehyde. The sequence is that of S-norcoclaurine synthase 1 from Papaver somniferum (Opium poppy).